Here is a 423-residue protein sequence, read N- to C-terminus: Adenylosuccinate synthetase (423 aa).

GTP-binding positions include 12–18 and 40–42; these read GDEGKGK and GHT. D13 functions as the Proton acceptor in the catalytic mechanism. Positions 13 and 40 each coordinate Mg(2+). IMP contacts are provided by residues 13–16, 38–41, T129, R143, Q221, T236, and R300; these read DEGK and NAGH. H41 (proton donor) is an active-site residue. Residue 296–302 coordinates substrate; that stretch reads SVTGRKR. GTP is bound by residues R302 and 408 to 410; that span reads SVG.

This sequence belongs to the adenylosuccinate synthetase family. Homodimer. The cofactor is Mg(2+).

It is found in the cytoplasm. It carries out the reaction IMP + L-aspartate + GTP = N(6)-(1,2-dicarboxyethyl)-AMP + GDP + phosphate + 2 H(+). Its pathway is purine metabolism; AMP biosynthesis via de novo pathway; AMP from IMP: step 1/2. In terms of biological role, plays an important role in the de novo pathway of purine nucleotide biosynthesis. Catalyzes the first committed step in the biosynthesis of AMP from IMP. The chain is Adenylosuccinate synthetase from Bacteroides thetaiotaomicron (strain ATCC 29148 / DSM 2079 / JCM 5827 / CCUG 10774 / NCTC 10582 / VPI-5482 / E50).